The chain runs to 507 residues: ATP synthase subunit alpha, chloroplastic (507 aa).

170–177 (GDRQTGKT) contacts ATP.

Belongs to the ATPase alpha/beta chains family. As to quaternary structure, F-type ATPases have 2 components, CF(1) - the catalytic core - and CF(0) - the membrane proton channel. CF(1) has five subunits: alpha(3), beta(3), gamma(1), delta(1), epsilon(1). CF(0) has four main subunits: a, b, b' and c.

It localises to the plastid. The protein resides in the chloroplast thylakoid membrane. It catalyses the reaction ATP + H2O + 4 H(+)(in) = ADP + phosphate + 5 H(+)(out). Functionally, produces ATP from ADP in the presence of a proton gradient across the membrane. The alpha chain is a regulatory subunit. The polypeptide is ATP synthase subunit alpha, chloroplastic (Phalaenopsis aphrodite subsp. formosana (Moth orchid)).